The chain runs to 347 residues: tRNA pseudouridine synthase D (347 aa).

The active-site Nucleophile is D81. The 147-residue stretch at G158–L304 folds into the TRUD domain.

This sequence belongs to the pseudouridine synthase TruD family.

It carries out the reaction uridine(13) in tRNA = pseudouridine(13) in tRNA. In terms of biological role, responsible for synthesis of pseudouridine from uracil-13 in transfer RNAs. The protein is tRNA pseudouridine synthase D of Vibrio vulnificus (strain YJ016).